The following is a 726-amino-acid chain: Germacradienol/geosmin synthase (726 aa).

The segment at 2-354 (TQQPFQLPHF…TSAADVGALL (353 aa)) is germacradienol/germacrene D synthase. Mg(2+) contacts are provided by aspartate 86, glutamate 91, asparagine 267, threonine 271, glutamine 276, aspartate 455, asparagine 598, serine 602, and glutamate 606. The DDXXD motif 1; degenerate motif lies at 86–91 (DDHFLE). A geosmin synthase region spans residues 355–726 (ADAVAQRARS…VPRSSPALTH (372 aa)). Residues 455–459 (DDYYP) carry the DDXXD motif 2; degenerate motif.

The protein belongs to the terpene synthase family. Mg(2+) is required as a cofactor.

It catalyses the reaction (2E,6E)-farnesyl diphosphate + H2O = (1E,4S,5E,7R)-germacra-1(10),5-dien-11-ol + diphosphate. It carries out the reaction (1E,4S,5E,7R)-germacra-1(10),5-dien-11-ol + H2O = (-)-geosmin + acetone. The enzyme catalyses (2E,6E)-farnesyl diphosphate = (-)-germacrene D + diphosphate. It functions in the pathway secondary metabolite biosynthesis; geosmin biosynthesis. It participates in sesquiterpene biosynthesis; germacradienol biosynthesis; germacradienol from farnesyl diphosphate: step 1/1. The protein operates within sesquiterpene biosynthesis; germacrene D biosynthesis; germacrene D from farnesyl diphosphate: step 1/1. Its function is as follows. Tow-domain protein where the N-terminal domain catalyzes the cyclization of farnesyl diphosphate (FPP) to a 85:15 mixture of the sesquiterpene alcohol germacradienol and the sesquiterpene hydrocarbon germacrene D. The C-terminal domain partially converts the germacradienol formed into geosmin, the characteristic odoriferous ('earthy aroma') constituent of Streptomyces species. The polypeptide is Germacradienol/geosmin synthase (cyc2) (Streptomyces coelicolor (strain ATCC BAA-471 / A3(2) / M145)).